The primary structure comprises 204 residues: UPF0637 protein USA300HOU_1046.1 (204 aa).

This sequence belongs to the UPF0637 family.

In Staphylococcus aureus (strain USA300 / TCH1516), this protein is UPF0637 protein USA300HOU_1046.1.